The sequence spans 204 residues: Guanylate kinase (204 aa).

The 182-residue stretch at 1-182 folds into the Guanylate kinase-like domain; that stretch reads MLYIISAPSG…ALSDLNTIIC (182 aa). Residue 7 to 14 coordinates ATP; it reads APSGTGKS.

It belongs to the guanylate kinase family.

The protein localises to the cytoplasm. The catalysed reaction is GMP + ATP = GDP + ADP. Its function is as follows. Essential for recycling GMP and indirectly, cGMP. This is Guanylate kinase from Baumannia cicadellinicola subsp. Homalodisca coagulata.